Consider the following 312-residue polypeptide: Olfactory receptor 4K17 (312 aa).

Residues 1–25 (MKLLNQSQVSEFILLGLTSSQDVEF) lie on the Extracellular side of the membrane. Asn-5 carries N-linked (GlcNAc...) asparagine glycosylation. Residues 26–49 (LLFALFSVIYVVTVLGNLLIIVTV) form a helical membrane-spanning segment. Topologically, residues 50 to 57 (FNTPNLNT) are cytoplasmic. Residues 58–79 (PMYFLLGNLSFVDMTLASFATP) form a helical membrane-spanning segment. Topologically, residues 80-100 (KVILNLLKKQKVISFAGCFTQ) are extracellular. Cys-97 and Cys-189 form a disulfide bridge. Residues 101-120 (IFLLHLLGGVEMVLLVSMAF) form a helical membrane-spanning segment. Over 121–139 (DRYVAICKPLHYMTIMNKK) the chain is Cytoplasmic. The helical transmembrane segment at 140–158 (VCVLLVVTSWLLGLLHSGF) threads the bilayer. The Extracellular segment spans residues 159–195 (QIPFAVNLPFCGPNVVDSIFCDLPLVTKLACIDIYFV). Residues 196–219 (QVVIVANSGIISLSCFIILLISYS) traverse the membrane as a helical segment. At 220-235 (LILITIKNHSPTGQSK) the chain is on the cytoplasmic side. Residues 236–258 (ARSTLTAHITVVILFFGPCIFIY) form a helical membrane-spanning segment. Over 259–269 (IWPFGNHSVDK) the chain is Extracellular. An N-linked (GlcNAc...) asparagine glycan is attached at Asn-264. Residues 270-289 (FLAVFYTIITPILNPIIYTL) form a helical membrane-spanning segment. Topologically, residues 290–312 (RNKEMKISMKKLWRAFVNSREDT) are cytoplasmic.

This sequence belongs to the G-protein coupled receptor 1 family.

The protein localises to the cell membrane. Its function is as follows. Odorant receptor. This is Olfactory receptor 4K17 (OR4K17) from Homo sapiens (Human).